A 139-amino-acid polypeptide reads, in one-letter code: Large ribosomal subunit protein uL16c (139 aa).

Positions 1–20 (MLSPKRTKYRKHHRGRMKGK) are disordered.

Belongs to the universal ribosomal protein uL16 family. Part of the 50S ribosomal subunit.

Its subcellular location is the plastid. The protein localises to the chloroplast. The sequence is that of Large ribosomal subunit protein uL16c from Pleurastrum terricola (Filamentous green alga).